The sequence spans 868 residues: Pro-neuregulin-2, membrane-bound isoform (868 aa).

Residues 1 to 114 (MRQVCCSALP…AAGGMRRDPA (114 aa)) form a disordered region. Residues 1–127 (MRQVCCSALP…SMLLFGVSLA (127 aa)) constitute a propeptide that is removed on maturation. Positions 19-75 (SSYSYSDSSSSSSSNNSSSSTSSRSSSRSSSRSSRGSTTTTSSSENSGSNSGSIFRP) are enriched in low complexity. Residues Asn-33 and Asn-34 are each glycosylated (N-linked (GlcNAc...) asparagine). Over residues 76-90 (AAPPEPRPQPQPQPR) the composition is skewed to pro residues. Residues 91–108 (SPAARRAAARSRAAAAGG) are compositionally biased toward low complexity. Over 128-429 (CYSPSLKSVQ…KEAEELYQKR (302 aa)) the chain is Extracellular. N-linked (GlcNAc...) asparagine glycans are attached at residues Asn-163, Asn-294, and Asn-362. In terms of domain architecture, Ig-like C2-type spans 253–348 (PKLKKMKSQT…RGRLHVNSVS (96 aa)). Disulfide bonds link Cys-273–Cys-327, Cys-361–Cys-375, Cys-369–Cys-386, and Cys-388–Cys-397. Residues 357–398 (HARKCNETAKSYCVNGGVCYYIEGINQLSCKCPNGFFGQRCL) form the EGF-like domain. Residues 430–450 (VLTITGICVALLVVGIVCVVA) form a helical membrane-spanning segment. Residues 451–868 (YCKTKKQRRQ…TRAKQDSGPL (418 aa)) are Cytoplasmic-facing. 5 disordered regions span residues 469-488 (MCPAHQNRSLANGPSHPRLD), 516-553 (TFSGSHSCSPSHHCSTATPTSSHRHESHTWSLERSESL), 671-690 (LLRHPAPPGPGPGPGADMQR), 720-806 (ASPF…DGAL), and 823-868 (LRSD…SGPL). Low complexity predominate over residues 518 to 530 (SGSHSCSPSHHCS). The span at 538–551 (HRHESHTWSLERSE) shows a compositional bias: basic and acidic residues. The segment covering 766 to 794 (LNGLAAQRARAARDSLSLSSGSGCGSASA) has biased composition (low complexity).

The protein belongs to the neuregulin family. In terms of assembly, interacts with ERBB3 and ERBB4. Post-translationally, proteolytic cleavage close to the plasma membrane on the external face leads to the release of the soluble growth factor form. In terms of processing, extensive glycosylation precedes the proteolytic cleavage. As to expression, expressed in most parts of the brain, especially the olfactory bulb and cerebellum where it localizes in granule and Purkinje cells. In the hippocampus, found in the granule cells of the dentate gyrus. In the basal forebrain, found in the cholinergic cells. In the hindbrain, weakly detectable in the motor trigeminal nucleus. Not detected in the hypothalamus. Also found in the liver and in the thymus. Not detected in heart, adrenal gland, or testis.

The protein localises to the cell membrane. It localises to the secreted. Its function is as follows. Direct ligand for ERBB3 and ERBB4 tyrosine kinase receptors. Concomitantly recruits ERBB1 and ERBB2 coreceptors, resulting in ligand-stimulated tyrosine phosphorylation and activation of the ERBB receptors. May also promote the heterodimerization with the EGF receptor. This chain is Pro-neuregulin-2, membrane-bound isoform (Nrg2), found in Rattus norvegicus (Rat).